Reading from the N-terminus, the 76-residue chain is Antimicrobial peptide Smp24 (76 aa).

Positions 1 to 22 (MQYKTFLVIFMAYLLVTHEAEA) are cleaved as a signal peptide. Residues 47 to 76 (SKRKRDVEDFFDPYQRDLDLELERLLSQLQ) constitute a propeptide that is removed on maturation.

This sequence belongs to the non-disulfide-bridged peptide (NDBP) superfamily. Medium-length antimicrobial peptide (group 3) family. Expressed by the venom gland.

The protein resides in the secreted. It is found in the target cell membrane. Functionally, peptide that shows antimicrobial activity, moderate cytolysis on eukaryote cells and interference with DNA synthesis. Has potent activity against Gram-positive bacteria and moderate activity against Gram-negative bacteria, as well as moderate activity against fungi. Acts by inducing bacterial membrane disruption. Uses multiple modes of action depending on the membrane lipid composition. Uses a toroidal pore mechanism against the prokaryotic like membrane and forms hexagonal phase non-lamellar structures in eukaryotic-like membrane. Shows activity against B.subtilis (MIC=4 ug/ml), S.epidermidis (MIC=8 ug/ml), S.aureus (MIC=8 ug/ml), E.coli (MIC=64 ug/ml), K.pneumoniae (MIC=128 ug/ml), P.aeruginosa (MIC=256 ug/ml), and C.albicans (MIC=32 ug/ml). Shows moderate hemolysis activity. This Scorpio palmatus (Israeli golden scorpion) protein is Antimicrobial peptide Smp24.